Here is a 339-residue protein sequence, read N- to C-terminus: Glycerol-3-phosphate dehydrogenase [NAD(P)+] (339 aa).

NADPH-binding residues include Ser-15, Tyr-16, His-36, and Lys-110. 3 residues coordinate sn-glycerol 3-phosphate: Lys-110, Gly-139, and Thr-141. Residue Ala-143 participates in NADPH binding. Sn-glycerol 3-phosphate contacts are provided by Lys-195, Asp-248, Ser-258, Arg-259, and Asn-260. The Proton acceptor role is filled by Lys-195. Position 259 (Arg-259) interacts with NADPH. Residues Val-283 and Glu-285 each coordinate NADPH.

Belongs to the NAD-dependent glycerol-3-phosphate dehydrogenase family.

Its subcellular location is the cytoplasm. It catalyses the reaction sn-glycerol 3-phosphate + NAD(+) = dihydroxyacetone phosphate + NADH + H(+). The catalysed reaction is sn-glycerol 3-phosphate + NADP(+) = dihydroxyacetone phosphate + NADPH + H(+). The protein operates within membrane lipid metabolism; glycerophospholipid metabolism. Its function is as follows. Catalyzes the reduction of the glycolytic intermediate dihydroxyacetone phosphate (DHAP) to sn-glycerol 3-phosphate (G3P), the key precursor for phospholipid synthesis. The polypeptide is Glycerol-3-phosphate dehydrogenase [NAD(P)+] (Serratia proteamaculans (strain 568)).